A 544-amino-acid chain; its full sequence is MSNNGLDVQDKPPAPPMRNTSTMIGAGSKDPGTLNHGSKPLPPNPEEKKKKDRFYRSILAGDKTNKKKEKERPEISLPSDFEHTIHVGFDAVTGEFTGMPEQWARLLQTSNITKSEQKKNPQAVLDVLEFYNSKKTSNSQKYMSFTDKSAEDYNSSNTLNVKTVSETPAVPPVSEDEDDDDDATPPPVIAPRPEHTKSVYTRSVIEPLPVTPTRDVATSPISPTENNTTPPDALTRNTEKQKKKPKMSDEEILEKLRSIVSVGDPKKKYTRFEKIGQGASGTVYTAMDVATGQEVAIKQMNLQQQPKKELIINEILVMRENKNPNIVNYLDSYLVGDELWVVMEYLAGGSLTDVVTETCMDEGQIAAVCRECLQALEFLHSNQVIHRDIKSDNILLGMDGSVKLTDFGFCAQITPEQSKRSTMVGTPYWMAPEVVTRKAYGPKVDIWSLGIMAIEMIEGEPPYLNENPLRALYLIATNGTPELQNPEKLSAIFRDFLNRCLEMDVEKRGSAKELLQHQFLKIAKPLSSLTPLIAAAKEATKNNH.

The segment at 1 to 79 (MSNNGLDVQD…KERPEISLPS (79 aa)) is disordered. S2 is modified (N-acetylserine). A Phosphoserine; by PKB and autocatalysis modification is found at S21. S57 carries the phosphoserine; by autocatalysis modification. Over residues 68 to 79 (KEKERPEISLPS) the composition is skewed to basic and acidic residues. The tract at residues 70-140 (KERPEISLPS…YNSKKTSNSQ (71 aa)) is autoregulatory region. Residues 75 to 88 (ISLPSDFEHTIHVG) enclose the CRIB domain. Residues 75–105 (ISLPSDFEHTIHVGFDAVTGEFTGMPEQWAR) form a GTPase-binding region. T84 bears the Phosphothreonine; by OXSR1 mark. S115 carries the phosphoserine modification. Y131 and Y142 each carry phosphotyrosine. Phosphoserine; by autocatalysis occurs at positions 144 and 149. The span at 150 to 166 (AEDYNSSNTLNVKTVSE) shows a compositional bias: polar residues. Residues 150–195 (AEDYNSSNTLNVKTVSETPAVPPVSEDEDDDDDATPPPVIAPRPEH) are disordered. Y153 is subject to Phosphotyrosine; by JAK2. The residue at position 174 (S174) is a Phosphoserine. The segment covering 174-183 (SEDEDDDDDA) has biased composition (acidic residues). T184 carries the post-translational modification Phosphothreonine. S198 bears the Phosphoserine; by autocatalysis mark. At Y200 the chain carries Phosphotyrosine; by JAK2. Phosphoserine; by autocatalysis is present on S203. Positions 209-250 (PVTPTRDVATSPISPTENNTTPPDALTRNTEKQKKKPKMSDE) are disordered. Phosphothreonine is present on residues T211 and T218. S219 and S222 each carry phosphoserine. Over residues 219–230 (SPISPTENNTTP) the composition is skewed to polar residues. Phosphothreonine occurs at positions 224, 228, and 229. In terms of domain architecture, Protein kinase spans 269 to 520 (YTRFEKIGQG…AKELLQHQFL (252 aa)). 275–283 (IGQGASGTV) lines the ATP pocket. Y284 bears the Phosphotyrosine; by JAK2 mark. K298 is an ATP binding site. The active-site Proton acceptor is D388. At T422 the chain carries Phosphothreonine; by autocatalysis, BRSK2 and PDPK1.

This sequence belongs to the protein kinase superfamily. STE Ser/Thr protein kinase family. STE20 subfamily. Homodimer in its autoinhibited state. Active as monomer. Interacts with GIT1. Component of cytoplasmic complexes, which also contains PXN, ARHGEF7 and GIT1. Interacts with NISCH. Interacts with DVL1; mediates the formation of a DVL1, MUSK and PAK1 ternary complex involved in AChR clustering. Binds to the caspase-cleaved p110 isoform of CDC2L1 and CDC2L2, p110C, but not the full-length proteins. Interacts with ARHGEF7. Interacts with SCRIB. Interacts with PDPK1. Interacts (via kinase domain) with RAF1. Interacts with NCK1 and NCK2. Interacts with TBCB. Interacts with BRSK2. Interacts tightly with GTP-bound but not GDP-bound CDC42/P21 and RAC1. Interacts with SNAI1. Interacts with CIB1 (via N-terminal region); the interaction is direct, promotes PAK1 activity and occurs in a calcium-dependent manner. Interacts with INPP5K. Interacts with gamma-tubulin. Interacts with RHOU; the interaction promotes PAK1 activation. Mg(2+) is required as a cofactor. In terms of processing, autophosphorylated in trans, meaning that in a dimer, one kinase molecule phosphorylates the other one. Activated by autophosphorylation at Thr-422 in response to a conformation change, triggered by interaction with GTP-bound CDC42 or RAC1. Activated by phosphorylation at Thr-422 by PDPK1. Phosphorylated by JAK2 in response to PRL; this increases PAK1 kinase activity. Phosphorylated at Ser-21 by PKB/AKT; this reduces interaction with NCK1 and association with focal adhesion sites. Activated by phosphorylation at Thr-422 by BRSK2. Upon DNA damage, phosphorylated at Thr-211 and translocates to the nucleoplasm. Phosphorylated at tyrosine residues, which can be enhanced by NTN1. In terms of tissue distribution, expressed predominantly in the brain, with higher expression in neuronal groups associated with motor function, and at lower levels in the spleen.

Its subcellular location is the cytoplasm. The protein resides in the cell junction. It localises to the focal adhesion. The protein localises to the cell projection. It is found in the lamellipodium. Its subcellular location is the cell membrane. The protein resides in the ruffle membrane. It localises to the invadopodium. The protein localises to the nucleus. It is found in the nucleoplasm. Its subcellular location is the chromosome. The protein resides in the cytoskeleton. It localises to the microtubule organizing center. The protein localises to the centrosome. The enzyme catalyses L-seryl-[protein] + ATP = O-phospho-L-seryl-[protein] + ADP + H(+). It carries out the reaction L-threonyl-[protein] + ATP = O-phospho-L-threonyl-[protein] + ADP + H(+). Phosphorylation of Thr-84 by OXSR1 inhibits activation. Activated by binding small G proteins. Binding of GTP-bound CDC42 or RAC1 to the autoregulatory region releases monomers from the autoinhibited dimer, and enables activation by phosphorylation of Thr-422. Its function is as follows. Protein kinase involved in intracellular signaling pathways downstream of integrins and receptor-type kinases that plays an important role in cytoskeleton dynamics, in cell adhesion, migration, proliferation, apoptosis, mitosis, and in vesicle-mediated transport processes. Can directly phosphorylate BAD and protects cells against apoptosis. Activated by interaction with CDC42 and RAC1. Functions as a GTPase effector that links the Rho-related GTPases CDC42 and RAC1 to the JNK MAP kinase pathway. Phosphorylates and activates MAP2K1, and thereby mediates activation of downstream MAP kinases. Involved in the reorganization of the actin cytoskeleton, actin stress fibers and of focal adhesion complexes. Phosphorylates the tubulin chaperone TBCB and thereby plays a role in the regulation of microtubule biogenesis and organization of the tubulin cytoskeleton. Plays a role in the regulation of insulin secretion in response to elevated glucose levels. Part of a ternary complex that contains PAK1, DVL1 and MUSK that is important for MUSK-dependent regulation of AChR clustering during the formation of the neuromuscular junction (NMJ). Activity is inhibited in cells undergoing apoptosis, potentially due to binding of CDC2L1 and CDC2L2. Phosphorylates MYL9/MLC2. Phosphorylates RAF1 at 'Ser-338' and 'Ser-339' resulting in: activation of RAF1, stimulation of RAF1 translocation to mitochondria, phosphorylation of BAD by RAF1, and RAF1 binding to BCL2. Phosphorylates SNAI1 at 'Ser-246' promoting its transcriptional repressor activity by increasing its accumulation in the nucleus. In podocytes, promotes NR3C2 nuclear localization. Required for atypical chemokine receptor ACKR2-induced phosphorylation of LIMK1 and cofilin (CFL1) and for the up-regulation of ACKR2 from endosomal compartment to cell membrane, increasing its efficiency in chemokine uptake and degradation. In synapses, seems to mediate the regulation of F-actin cluster formation performed by SHANK3, maybe through CFL1 phosphorylation and inactivation. Plays a role in RUFY3-mediated facilitating gastric cancer cells migration and invasion. In response to DNA damage, phosphorylates MORC2 which activates its ATPase activity and facilitates chromatin remodeling. In neurons, plays a crucial role in regulating GABA(A) receptor synaptic stability and hence GABAergic inhibitory synaptic transmission through its role in F-actin stabilization. In hippocampal neurons, necessary for the formation of dendritic spines and excitatory synapses; this function is dependent on kinase activity and may be exerted by the regulation of actomyosin contractility through the phosphorylation of myosin II regulatory light chain (MLC). Along with GIT1, positively regulates microtubule nucleation during interphase. Phosphorylates FXR1, promoting its localization to stress granules and activity. Phosphorylates ILK on 'Thr-173' and 'Ser-246', promoting nuclear export of ILK. In Rattus norvegicus (Rat), this protein is Serine/threonine-protein kinase PAK 1.